A 309-amino-acid chain; its full sequence is Acetyl-coenzyme A carboxylase carboxyl transferase subunit beta (309 aa).

Positions 29 to 298 (NSDWTSCCKG…AINSSENETS (270 aa)) constitute a CoA carboxyltransferase N-terminal domain. Cys-35, Cys-36, Cys-52, and Cys-55 together coordinate Zn(2+).

The protein belongs to the AccD/PCCB family. In terms of assembly, acetyl-CoA carboxylase is a heterohexamer composed of biotin carboxyl carrier protein (AccB), biotin carboxylase (AccC) and two subunits each of ACCase subunit alpha (AccA) and ACCase subunit beta (AccD). Requires Zn(2+) as cofactor.

The protein localises to the cytoplasm. It carries out the reaction N(6)-carboxybiotinyl-L-lysyl-[protein] + acetyl-CoA = N(6)-biotinyl-L-lysyl-[protein] + malonyl-CoA. It participates in lipid metabolism; malonyl-CoA biosynthesis; malonyl-CoA from acetyl-CoA: step 1/1. Component of the acetyl coenzyme A carboxylase (ACC) complex. Biotin carboxylase (BC) catalyzes the carboxylation of biotin on its carrier protein (BCCP) and then the CO(2) group is transferred by the transcarboxylase to acetyl-CoA to form malonyl-CoA. The sequence is that of Acetyl-coenzyme A carboxylase carboxyl transferase subunit beta from Pelagibacter ubique (strain HTCC1062).